A 176-amino-acid chain; its full sequence is GTP-dependent dephospho-CoA kinase (176 aa).

GTP is bound by residues Asp47, Val48, Asp66, and Glu125.

The protein belongs to the GTP-dependent DPCK family.

The enzyme catalyses 3'-dephospho-CoA + GTP = GDP + CoA + H(+). It functions in the pathway cofactor biosynthesis; coenzyme A biosynthesis. In terms of biological role, catalyzes the GTP-dependent phosphorylation of the 3'-hydroxyl group of dephosphocoenzyme A to form coenzyme A (CoA). The protein is GTP-dependent dephospho-CoA kinase of Methanocella arvoryzae (strain DSM 22066 / NBRC 105507 / MRE50).